Consider the following 856-residue polypeptide: PR domain zinc finger protein 1 (856 aa).

In terms of domain architecture, SET spans proline 115–cysteine 233. Disordered regions lie at residues threonine 357 to leucine 399 and glycine 532 to alanine 571. Composition is skewed to low complexity over residues serine 373–serine 393 and serine 542–serine 556. The interval histidine 558 to lysine 605 is interaction with PIAS1. C2H2-type zinc fingers lie at residues tyrosine 606–histidine 628, phenylalanine 634–histidine 656, histidine 662–histidine 684, and tyrosine 690–histidine 712. Residue lysine 847 forms a Glycyl lysine isopeptide (Lys-Gly) (interchain with G-Cter in SUMO1); alternate linkage. A Glycyl lysine isopeptide (Lys-Gly) (interchain with G-Cter in SUMO2); alternate cross-link involves residue lysine 847.

The protein belongs to the class V-like SAM-binding methyltransferase superfamily. As to quaternary structure, interacts with PRMT5. Interacts with FBXO10. Interacts with FBXO11. Interacts with multiple nuclear sumoylation E3 ligases, including CBX4, PIAS1, PIAS2, PIAS3, PIAS4, PML and RNF4, but not RANBP2. Interacts with LDB1, SMARCD3 and SMARCC1. Interacts with EEIG1; following TNFSF11/RANKL stimulation in bone marrow-derived macrophages, the interaction promotes the binding of PRDM1/BLIMP1 to the gene promoter of IRF8. Post-translationally, sumoylation at Lys-847 by PIAS1 increases transcriptional repressor activity, and is critical for plasma cell differentiation. Can be sumoylated with SUMO1 and SUMO2 by PML. Degradation of the wild-type protein mostly depends upon sumoylation, rather than ubiquitination. Desumoylated by SENP1 and SENP6. Ubiquitinated by SCF(FBXO11), leading to its degradation by the proteasome. Expressed in bone marrow macrophages (at protein level). Expressed in innate lymphocytes, including tissue-resident conventional natural killer (cNK) cells in liver. Expressed also weakly in tissue-resident natural killer (trNK) and natural killer T (NKT) cells in liver. In terms of tissue distribution, expressed in bone marrow, spleen and lymph node but not in brain, heart, kidney, liver, ovary or muscle. Weak expression detected in the lung. As to expression, expressed only in the yolk sac. Expressed in embryo, yolk sac, placenta, splenocytes, and activated T-cells.

It is found in the nucleus. Its subcellular location is the cytoplasm. Transcription factor that mediates a transcriptional program in various innate and adaptive immune tissue-resident lymphocyte T cell types such as tissue-resident memory T (Trm), natural killer (trNK) and natural killer T (NKT) cells and negatively regulates gene expression of proteins that promote the egress of tissue-resident T-cell populations from non-lymphoid organs. Plays a role in the development, retention and long-term establishment of adaptive and innate tissue-resident lymphocyte T cell types in non-lymphoid organs, such as the skin and gut, but also in other nonbarrier tissues like liver and kidney, and therefore may provide immediate immunological protection against reactivating infections or viral reinfection. Binds specifically to the PRDI element in the promoter of the beta-interferon gene. Drives the maturation of B-lymphocytes into Ig secreting cells. Associates with the transcriptional repressor ZNF683 to chromatin at gene promoter regions. Binds to the promoter and acts as a transcriptional repressor of IRF8, thereby promotes transcription of osteoclast differentiation factors such as NFATC1 and EEIG1. The protein is PR domain zinc finger protein 1 (Prdm1) of Mus musculus (Mouse).